The chain runs to 302 residues: L-glutamate/L-aspartate-binding protein (302 aa).

A signal peptide spans Met1–Ala23.

The protein belongs to the bacterial solute-binding protein 3 family.

It localises to the periplasm. In terms of biological role, binds L-glutamate and L-aspartate. The protein is L-glutamate/L-aspartate-binding protein of Pseudomonas aeruginosa (strain ATCC 15692 / DSM 22644 / CIP 104116 / JCM 14847 / LMG 12228 / 1C / PRS 101 / PAO1).